The chain runs to 991 residues: Translation initiation factor IF-2 (991 aa).

Disordered stretches follow at residues 58–82 and 106–405; these read EGKK…GRSR and QARA…PAPQ. The segment covering 106–164 has biased composition (low complexity); it reads QARADAAASDAAPAEPAPAAAEPSASAPVTAPVNAPAADAPQAPATAAPDTAAPAAETP. A compositionally biased stretch (pro residues) spans 165–175; that stretch reads SQPPAVEPQPA. 3 stretches are compositionally biased toward low complexity: residues 190–206, 221–258, and 267–276; these read AKPA…AAVE, AVQA…ASKP, and APVPVAAPAV. The segment covering 279–289 has biased composition (basic and acidic residues); sequence AGREEARRAAE. Residues 379-388 show a composition bias toward gly residues; it reads RAGGKGGKGG. A compositionally biased stretch (basic and acidic residues) spans 395–405; sequence QAERRHEPAPQ. The 168-residue stretch at 492 to 659 folds into the tr-type G domain; the sequence is PRAPVVTVMG…NVLLQAEILE (168 aa). The tract at residues 501 to 508 is G1; sequence GHVDHGKT. 501-508 serves as a coordination point for GTP; it reads GHVDHGKT. The G2 stretch occupies residues 526–530; sequence GITQH. The interval 547-550 is G3; it reads DTPG. Residues 547-551 and 601-604 each bind GTP; these read DTPGH and NKID. The tract at residues 601-604 is G4; it reads NKID. A G5 region spans residues 637–639; it reads SAK.

It belongs to the TRAFAC class translation factor GTPase superfamily. Classic translation factor GTPase family. IF-2 subfamily.

Its subcellular location is the cytoplasm. In terms of biological role, one of the essential components for the initiation of protein synthesis. Protects formylmethionyl-tRNA from spontaneous hydrolysis and promotes its binding to the 30S ribosomal subunits. Also involved in the hydrolysis of GTP during the formation of the 70S ribosomal complex. In Bordetella petrii (strain ATCC BAA-461 / DSM 12804 / CCUG 43448), this protein is Translation initiation factor IF-2.